The following is a 124-amino-acid chain: Small ribosomal subunit protein uS12 (124 aa).

A 3-methylthioaspartic acid modification is found at Asp89.

Belongs to the universal ribosomal protein uS12 family. In terms of assembly, part of the 30S ribosomal subunit. Contacts proteins S8 and S17. May interact with IF1 in the 30S initiation complex.

Its function is as follows. With S4 and S5 plays an important role in translational accuracy. Functionally, interacts with and stabilizes bases of the 16S rRNA that are involved in tRNA selection in the A site and with the mRNA backbone. Located at the interface of the 30S and 50S subunits, it traverses the body of the 30S subunit contacting proteins on the other side and probably holding the rRNA structure together. The combined cluster of proteins S8, S12 and S17 appears to hold together the shoulder and platform of the 30S subunit. The protein is Small ribosomal subunit protein uS12 of Thermoanaerobacter pseudethanolicus (strain ATCC 33223 / 39E) (Clostridium thermohydrosulfuricum).